The following is a 333-amino-acid chain: B3 domain-containing protein At1g32030 (333 aa).

Polar residues-rich tracts occupy residues 76–99 (VTVR…SLLD) and 134–143 (PQNASSSSTL). The segment at 76–179 (VTVRNPEQNQ…SEPKKAKTPY (104 aa)) is disordered. Positions 220–328 (QSRLLMPFNT…ILSFALVLPP (109 aa)) form a DNA-binding region, TF-B3.

The protein resides in the nucleus. In Arabidopsis thaliana (Mouse-ear cress), this protein is B3 domain-containing protein At1g32030.